Consider the following 991-residue polypeptide: Translation initiation factor IF-2 (991 aa).

2 disordered regions span residues 126–220 (QADH…DVGE) and 325–359 (VKAA…VDEK). 2 stretches are compositionally biased toward polar residues: residues 138-160 (QTES…TEPA) and 201-210 (PAAQTESAVQ). Over residues 326 to 340 (KAAGDGDTAPAADDA) the composition is skewed to low complexity. The segment covering 343-353 (GKKKPGKKKKK) has biased composition (basic residues). Residues 488-658 (IRPPVVTIMG…LTEAEIRELK (171 aa)) form the tr-type G domain. Positions 497–504 (GHVDHGKT) are G1. Residue 497 to 504 (GHVDHGKT) participates in GTP binding. Positions 522-526 (GITQH) are G2. The tract at residues 544-547 (DTPG) is G3. GTP is bound by residues 544–548 (DTPGH) and 598–601 (NKID). Residues 598-601 (NKID) form a G4 region. Positions 634–636 (SAK) are G5.

This sequence belongs to the TRAFAC class translation factor GTPase superfamily. Classic translation factor GTPase family. IF-2 subfamily.

Its subcellular location is the cytoplasm. Functionally, one of the essential components for the initiation of protein synthesis. Protects formylmethionyl-tRNA from spontaneous hydrolysis and promotes its binding to the 30S ribosomal subunits. Also involved in the hydrolysis of GTP during the formation of the 70S ribosomal complex. This Chlorobium phaeobacteroides (strain DSM 266 / SMG 266 / 2430) protein is Translation initiation factor IF-2.